A 763-amino-acid polypeptide reads, in one-letter code: Transferrin receptor protein 1 (763 aa).

Topologically, residues Met-1–Cys-67 are cytoplasmic. The mediates interaction with SH3BP4 stretch occupies residues Met-1 to Cys-67. Phosphoserine occurs at positions 10 and 19. Tyr-20 is subject to Phosphotyrosine. An Endocytosis signal motif is present at residues Tyr-20–Phe-23. A Phosphothreonine modification is found at Thr-21. A Phosphoserine modification is found at Ser-24. The short motif at Lys-58–Arg-61 is the Stop-transfer sequence element. Cys-67 is lipidated: S-palmitoyl cysteine. The chain crosses the membrane as a helical; Signal-anchor for type II membrane protein span at residues Phe-68 to Tyr-88. At Cys-89–Phe-763 the chain is on the extracellular side. Thr-104 carries an O-linked (GalNAc...) threonine glycan. Residues Ser-225–Phe-315 enclose the PA domain. N-linked (GlcNAc...) asparagine glycosylation is found at Asn-253 and Asn-319. The interval Arg-572–Phe-763 is ligand-binding. The Cell attachment site motif lies at Arg-649–Asp-651. N-linked (GlcNAc...) asparagine glycosylation is found at Asn-725 and Asn-730.

The protein belongs to the peptidase M28 family. M28B subfamily. As to quaternary structure, homodimer; disulfide-linked. Binds one transferrin molecule per subunit. Interacts with SH3BP4. Interacts with STEAP3; facilitates TFRC endocytosis in erythroid precursor cells. Post-translationally, stearoylated by ZDHHC6 which inhibits TFRC-mediated activation of the JNK pathway and promotes mitochondrial fragmentation. Stearoylation does not affect iron uptake. In terms of processing, N- and O-glycosylated, phosphorylated and palmitoylated.

It is found in the cell membrane. Its subcellular location is the melanosome. In terms of biological role, cellular uptake of iron occurs via receptor-mediated endocytosis of ligand-occupied transferrin receptor into specialized endosomes. Endosomal acidification leads to iron release. The apotransferrin-receptor complex is then recycled to the cell surface with a return to neutral pH and the concomitant loss of affinity of apotransferrin for its receptor. Transferrin receptor is necessary for development of erythrocytes and the nervous system. Upon stimulation, positively regulates T and B cell proliferation through iron uptake. Acts as a lipid sensor that regulates mitochondrial fusion by regulating activation of the JNK pathway. When dietary levels of stearate (C18:0) are low, promotes activation of the JNK pathway, resulting in HUWE1-mediated ubiquitination and subsequent degradation of the mitofusin MFN2 and inhibition of mitochondrial fusion. When dietary levels of stearate (C18:0) are high, TFRC stearoylation inhibits activation of the JNK pathway and thus degradation of the mitofusin MFN2. Mediates uptake of NICOL1 into fibroblasts where it may regulate extracellular matrix production. This is Transferrin receptor protein 1 (Tfrc) from Mus musculus (Mouse).